A 574-amino-acid chain; its full sequence is Myo-inositol transporter FST1 (574 aa).

The Cytoplasmic portion of the chain corresponds to 1–76 (MGKSRQNSTT…VQFANPKHFT (76 aa)). The helical transmembrane segment at 77 to 97 (WLLVAFASMGGLLSGLDQSLI) threads the bilayer. Residues 98-115 (SGANLFLPDDLGLTEHEN) are Extracellular-facing. The helical transmembrane segment at 116–136 (SLVNSGMPLGAVGGALLLSPA) threads the bilayer. Over 137 to 143 (NEYFGRK) the chain is Cytoplasmic. The helical transmembrane segment at 144 to 164 (GAIIISIILYTIGAALEAGSI) threads the bilayer. Residues 165 to 173 (NFGMIVSSR) lie on the Extracellular side of the membrane. The chain crosses the membrane as a helical span at residues 174 to 194 (VILGLGVGLEGGTVPVYVAET). At 195-205 (VERRIRGNLVS) the chain is on the cytoplasmic side. A helical membrane pass occupies residues 206-226 (LYQFNIALGEVLGYAVGAIFL). Over 227 to 233 (NVPGNWR) the chain is Extracellular. Residues 234–254 (YILGSSLLFSTIMFFGMLFLP) traverse the membrane as a helical segment. Over 255–330 (ESPRFLIHQK…RARRALVYAN (76 aa)) the chain is Cytoplasmic. Residues 331–351 (IMILLGQLTGVNAIMYYMSVL) traverse the membrane as a helical segment. Over 352-363 (MNQIGFDKKESN) the chain is Extracellular. Residues 364–384 (YMSLVGGGSLLLGTIPAIFLM) traverse the membrane as a helical segment. The Cytoplasmic portion of the chain corresponds to 385–390 (ERFGRR). The chain crosses the membrane as a helical span at residues 391–411 (FWAITMLPGFFIGLVLIGVSY). The Extracellular segment spans residues 412-426 (QFDVETQLQTVEGLY). The chain crosses the membrane as a helical span at residues 427–447 (LSGLIIYMGFFGSYACLTWVV). Residues 448 to 465 (PSEVYPTYLRSYGMTTSD) lie on the Cytoplasmic side of the membrane. A helical membrane pass occupies residues 466–486 (ALLFLASFIVTYNFTAMQNAM). At 487–490 (GKTG) the chain is on the extracellular side. A helical membrane pass occupies residues 491–511 (LALGFYGGIAFIGEIYQIFFM). Residues 512-574 (PETKNKTLEE…PKDQVQVSHA (63 aa)) lie on the Cytoplasmic side of the membrane.

Belongs to the major facilitator superfamily. Sugar transporter (TC 2.A.1.1) family.

The protein resides in the cell membrane. The catalysed reaction is myo-inositol(out) + H(+)(out) = myo-inositol(in) + H(+)(in). In terms of biological role, transporter for myo-inositol. Also appears to transport the polyketide mycotoxin fumonisin B1 (FB1). Does not appear to transport hexose sugars. The sequence is that of Myo-inositol transporter FST1 from Gibberella moniliformis (strain M3125 / FGSC 7600) (Maize ear and stalk rot fungus).